Here is a 372-residue protein sequence, read N- to C-terminus: 4-hydroxy-3-methylbut-2-en-1-yl diphosphate synthase (flavodoxin) (372 aa).

Positions 270, 273, 305, and 312 each coordinate [4Fe-4S] cluster.

This sequence belongs to the IspG family. [4Fe-4S] cluster is required as a cofactor.

The enzyme catalyses (2E)-4-hydroxy-3-methylbut-2-enyl diphosphate + oxidized [flavodoxin] + H2O + 2 H(+) = 2-C-methyl-D-erythritol 2,4-cyclic diphosphate + reduced [flavodoxin]. The protein operates within isoprenoid biosynthesis; isopentenyl diphosphate biosynthesis via DXP pathway; isopentenyl diphosphate from 1-deoxy-D-xylulose 5-phosphate: step 5/6. Functionally, converts 2C-methyl-D-erythritol 2,4-cyclodiphosphate (ME-2,4cPP) into 1-hydroxy-2-methyl-2-(E)-butenyl 4-diphosphate. This is 4-hydroxy-3-methylbut-2-en-1-yl diphosphate synthase (flavodoxin) from Enterobacter sp. (strain 638).